We begin with the raw amino-acid sequence, 84 residues long: Putative movement protein (84 aa).

Residues 15-35 (ALHGILVAFIAVLCLIGCLWA) traverse the membrane as a helical segment.

As to quaternary structure, interacts with the capsid protein (CP). Part of a MP-CP-viral DNA complex.

It is found in the host membrane. Involved in the viral transport within, and between cells. This is Putative movement protein from Miscanthus streak virus (isolate 91) (MiSV).